Consider the following 67-residue polypeptide: Large ribosomal subunit protein eL38 (67 aa).

It belongs to the eukaryotic ribosomal protein eL38 family.

The protein is Large ribosomal subunit protein eL38 (rpl38e) of Aeropyrum pernix (strain ATCC 700893 / DSM 11879 / JCM 9820 / NBRC 100138 / K1).